Consider the following 2234-residue polypeptide: Bridge-like lipid transfer protein family member 2 (2234 aa).

Positions 1-31 (MPLFLSALLVLLLVALSALFLGRWLVVRLAT) are cleaved as a signal peptide. The transmembrane domain stretch occupies residues 29-108 (LATRWCQRKL…LQKVSSLSAP (80 aa)). A Phosphoserine modification is found at Ser563. Positions 1496 to 1529 (QMSAKKPKRGIPPSAQVPPHVSTPSFSGRPDKGS) are disordered. Residues 1814–1885 (ILHLQEAVRQ…LNILIRCFKD (72 aa)) are a coiled coil. Residues Ser1846 and Ser2090 each carry the phosphoserine modification.

The protein belongs to the SABRE family.

The protein resides in the cell membrane. It is found in the endoplasmic reticulum membrane. It localises to the mitochondrion membrane. Its function is as follows. Tube-forming lipid transport protein which binds to phosphatidylinositols and affects phosphatidylinositol-4,5-bisphosphate (PtdIns-4,5-P2) distribution. In Mus musculus (Mouse), this protein is Bridge-like lipid transfer protein family member 2 (Bltp2).